The primary structure comprises 256 residues: Pimeloyl-[acyl-carrier protein] methyl ester esterase (256 aa).

The AB hydrolase-1 domain occupies 15–242 (HLVLLHGWGL…AAHAPFISHP (228 aa)). Substrate-binding positions include tryptophan 22, 82-83 (SL), and 143-147 (FLALQ). Catalysis depends on serine 82, which acts as the Nucleophile. Active-site residues include aspartate 207 and histidine 235. Position 235 (histidine 235) interacts with substrate.

The protein belongs to the AB hydrolase superfamily. Carboxylesterase BioH family. Monomer.

Its subcellular location is the cytoplasm. It carries out the reaction 6-carboxyhexanoyl-[ACP] methyl ester + H2O = 6-carboxyhexanoyl-[ACP] + methanol + H(+). Its pathway is cofactor biosynthesis; biotin biosynthesis. In terms of biological role, the physiological role of BioH is to remove the methyl group introduced by BioC when the pimeloyl moiety is complete. It allows to synthesize pimeloyl-ACP via the fatty acid synthetic pathway through the hydrolysis of the ester bonds of pimeloyl-ACP esters. The sequence is that of Pimeloyl-[acyl-carrier protein] methyl ester esterase from Escherichia coli O157:H7.